Here is a 401-residue protein sequence, read N- to C-terminus: Probable tRNA sulfurtransferase (401 aa).

A THUMP domain is found at Glu-60 to Asp-165. Residues Met-183–Ile-184, His-208–Phe-209, Arg-265, Gly-287, and Gln-296 each bind ATP.

It belongs to the ThiI family.

Its subcellular location is the cytoplasm. It carries out the reaction [ThiI sulfur-carrier protein]-S-sulfanyl-L-cysteine + a uridine in tRNA + 2 reduced [2Fe-2S]-[ferredoxin] + ATP + H(+) = [ThiI sulfur-carrier protein]-L-cysteine + a 4-thiouridine in tRNA + 2 oxidized [2Fe-2S]-[ferredoxin] + AMP + diphosphate. The enzyme catalyses [ThiS sulfur-carrier protein]-C-terminal Gly-Gly-AMP + S-sulfanyl-L-cysteinyl-[cysteine desulfurase] + AH2 = [ThiS sulfur-carrier protein]-C-terminal-Gly-aminoethanethioate + L-cysteinyl-[cysteine desulfurase] + A + AMP + 2 H(+). The protein operates within cofactor biosynthesis; thiamine diphosphate biosynthesis. Catalyzes the ATP-dependent transfer of a sulfur to tRNA to produce 4-thiouridine in position 8 of tRNAs, which functions as a near-UV photosensor. Also catalyzes the transfer of sulfur to the sulfur carrier protein ThiS, forming ThiS-thiocarboxylate. This is a step in the synthesis of thiazole, in the thiamine biosynthesis pathway. The sulfur is donated as persulfide by IscS. The protein is Probable tRNA sulfurtransferase of Bacillus licheniformis (strain ATCC 14580 / DSM 13 / JCM 2505 / CCUG 7422 / NBRC 12200 / NCIMB 9375 / NCTC 10341 / NRRL NRS-1264 / Gibson 46).